Here is a 132-residue protein sequence, read N- to C-terminus: Small ribosomal subunit protein uS19 (132 aa).

This sequence belongs to the universal ribosomal protein uS19 family.

Its function is as follows. Protein S19 forms a complex with S13 that binds strongly to the 16S ribosomal RNA. The protein is Small ribosomal subunit protein uS19 (rps19) of Pyrococcus horikoshii (strain ATCC 700860 / DSM 12428 / JCM 9974 / NBRC 100139 / OT-3).